The primary structure comprises 141 residues: Large ribosomal subunit protein bL17 (141 aa).

It belongs to the bacterial ribosomal protein bL17 family. In terms of assembly, part of the 50S ribosomal subunit. Contacts protein L32.

In Chlamydia trachomatis serovar D (strain ATCC VR-885 / DSM 19411 / UW-3/Cx), this protein is Large ribosomal subunit protein bL17.